The sequence spans 282 residues: Acetyl-coenzyme A carboxylase carboxyl transferase subunit beta (282 aa).

The CoA carboxyltransferase N-terminal domain maps to 29–282 (LMKRCPNCGL…LLKYGGMQDD (254 aa)). Positions 33, 36, 51, and 54 each coordinate Zn(2+). The segment at 33 to 54 (CPNCGLEFFARRLDKYKTCPDC) adopts a C4-type zinc-finger fold.

The protein belongs to the AccD/PCCB family. As to quaternary structure, acetyl-CoA carboxylase is a heterohexamer composed of biotin carboxyl carrier protein (AccB), biotin carboxylase (AccC) and two subunits each of ACCase subunit alpha (AccA) and ACCase subunit beta (AccD). Zn(2+) serves as cofactor.

It is found in the cytoplasm. It carries out the reaction N(6)-carboxybiotinyl-L-lysyl-[protein] + acetyl-CoA = N(6)-biotinyl-L-lysyl-[protein] + malonyl-CoA. It functions in the pathway lipid metabolism; malonyl-CoA biosynthesis; malonyl-CoA from acetyl-CoA: step 1/1. Functionally, component of the acetyl coenzyme A carboxylase (ACC) complex. Biotin carboxylase (BC) catalyzes the carboxylation of biotin on its carrier protein (BCCP) and then the CO(2) group is transferred by the transcarboxylase to acetyl-CoA to form malonyl-CoA. The sequence is that of Acetyl-coenzyme A carboxylase carboxyl transferase subunit beta from Lactobacillus delbrueckii subsp. bulgaricus (strain ATCC 11842 / DSM 20081 / BCRC 10696 / JCM 1002 / NBRC 13953 / NCIMB 11778 / NCTC 12712 / WDCM 00102 / Lb 14).